A 249-amino-acid polypeptide reads, in one-letter code: Dof zinc finger protein DOF4.5 (249 aa).

Residues 25–79 (RVCARCDSDNTKFCYYNNYCEFQPRYFCKNCRRYWTHGGALRNIPIGGSSRAKRA) form a Dof-type zinc finger. 4 residues coordinate Zn(2+): cysteine 27, cysteine 30, cysteine 52, and cysteine 55.

Its subcellular location is the nucleus. Functionally, transcription factor that binds specifically to a 5'-AA[AG]G-3' consensus core sequence. The chain is Dof zinc finger protein DOF4.5 (DOF4.5) from Arabidopsis thaliana (Mouse-ear cress).